The chain runs to 292 residues: 4-hydroxy-tetrahydrodipicolinate synthase (292 aa).

Residue Thr45 coordinates pyruvate. Catalysis depends on Tyr133, which acts as the Proton donor/acceptor. Lys161 functions as the Schiff-base intermediate with substrate in the catalytic mechanism. Pyruvate is bound at residue Ile203.

The protein belongs to the DapA family. Homotetramer; dimer of dimers.

It localises to the cytoplasm. It carries out the reaction L-aspartate 4-semialdehyde + pyruvate = (2S,4S)-4-hydroxy-2,3,4,5-tetrahydrodipicolinate + H2O + H(+). Its pathway is amino-acid biosynthesis; L-lysine biosynthesis via DAP pathway; (S)-tetrahydrodipicolinate from L-aspartate: step 3/4. In terms of biological role, catalyzes the condensation of (S)-aspartate-beta-semialdehyde [(S)-ASA] and pyruvate to 4-hydroxy-tetrahydrodipicolinate (HTPA). This chain is 4-hydroxy-tetrahydrodipicolinate synthase, found in Acidiphilium cryptum (strain JF-5).